A 116-amino-acid polypeptide reads, in one-letter code: Ribonuclease P protein component (116 aa).

The protein belongs to the RnpA family. As to quaternary structure, consists of a catalytic RNA component (M1 or rnpB) and a protein subunit.

The catalysed reaction is Endonucleolytic cleavage of RNA, removing 5'-extranucleotides from tRNA precursor.. In terms of biological role, RNaseP catalyzes the removal of the 5'-leader sequence from pre-tRNA to produce the mature 5'-terminus. It can also cleave other RNA substrates such as 4.5S RNA. The protein component plays an auxiliary but essential role in vivo by binding to the 5'-leader sequence and broadening the substrate specificity of the ribozyme. This chain is Ribonuclease P protein component, found in Bacillus velezensis (strain DSM 23117 / BGSC 10A6 / LMG 26770 / FZB42) (Bacillus amyloliquefaciens subsp. plantarum).